The primary structure comprises 429 residues: Bifunctional protein GlmU (429 aa).

The interval 1 to 223 is pyrophosphorylase; the sequence is MKISVLILAA…EQDFMGVNDK (223 aa). Residues 8–11, Lys22, Gln74, and 81–82 each bind UDP-N-acetyl-alpha-D-glucosamine; these read LAAG and GT. Mg(2+) is bound at residue Asp102. Residues Gly135, Glu149, Asn164, and Asn221 each contribute to the UDP-N-acetyl-alpha-D-glucosamine site. Asn221 contacts Mg(2+). The segment at 224–244 is linker; it reads IELCLAQDLMQEAIKKEWMKQ. An N-acetyltransferase region spans residues 245–429; that stretch reads GVIFHMPATT…KDYFYTKFKK (185 aa). 2 residues coordinate UDP-N-acetyl-alpha-D-glucosamine: Arg308 and Lys325. The active-site Proton acceptor is the His336. The UDP-N-acetyl-alpha-D-glucosamine site is built by Tyr339 and Asn350. Residues 359–360, Ser378, Ala396, and Arg413 contribute to the acetyl-CoA site; that span reads NY.

It in the N-terminal section; belongs to the N-acetylglucosamine-1-phosphate uridyltransferase family. This sequence in the C-terminal section; belongs to the transferase hexapeptide repeat family. In terms of assembly, homotrimer. The cofactor is Mg(2+).

It is found in the cytoplasm. It carries out the reaction alpha-D-glucosamine 1-phosphate + acetyl-CoA = N-acetyl-alpha-D-glucosamine 1-phosphate + CoA + H(+). The catalysed reaction is N-acetyl-alpha-D-glucosamine 1-phosphate + UTP + H(+) = UDP-N-acetyl-alpha-D-glucosamine + diphosphate. It participates in nucleotide-sugar biosynthesis; UDP-N-acetyl-alpha-D-glucosamine biosynthesis; N-acetyl-alpha-D-glucosamine 1-phosphate from alpha-D-glucosamine 6-phosphate (route II): step 2/2. Its pathway is nucleotide-sugar biosynthesis; UDP-N-acetyl-alpha-D-glucosamine biosynthesis; UDP-N-acetyl-alpha-D-glucosamine from N-acetyl-alpha-D-glucosamine 1-phosphate: step 1/1. It functions in the pathway bacterial outer membrane biogenesis; LPS lipid A biosynthesis. Functionally, catalyzes the last two sequential reactions in the de novo biosynthetic pathway for UDP-N-acetylglucosamine (UDP-GlcNAc). The C-terminal domain catalyzes the transfer of acetyl group from acetyl coenzyme A to glucosamine-1-phosphate (GlcN-1-P) to produce N-acetylglucosamine-1-phosphate (GlcNAc-1-P), which is converted into UDP-GlcNAc by the transfer of uridine 5-monophosphate (from uridine 5-triphosphate), a reaction catalyzed by the N-terminal domain. In Campylobacter lari (strain RM2100 / D67 / ATCC BAA-1060), this protein is Bifunctional protein GlmU.